Here is a 127-residue protein sequence, read N- to C-terminus: Major sperm protein 33 (127 aa).

A2 is subject to N-acetylalanine. Residues 9 to 126 (DIQTQPGTKI…RRKNLPIEYN (118 aa)) form the MSP domain.

As to expression, sperm.

The protein localises to the cell projection. Its subcellular location is the pseudopodium. It is found in the cytoplasm. The protein resides in the cytoskeleton. In terms of biological role, central component in molecular interactions underlying sperm crawling. Forms an extensive filament system that extends from sperm villipoda, along the leading edge of the pseudopod. The chain is Major sperm protein 33 (msp-33) from Caenorhabditis elegans.